Reading from the N-terminus, the 105-residue chain is N(4)-acetylcytidine amidohydrolase (105 aa).

The region spanning 8-93 is the ASCH domain; it reads TFFEFLTPLV…ALIQEIYPNI (86 aa). Lys-22 acts as the Proton acceptor in catalysis. The active-site Nucleophile is the Thr-25. Glu-75 (proton donor) is an active-site residue.

It belongs to the N(4)-acetylcytidine amidohydrolase family.

The catalysed reaction is N(4)-acetylcytidine + H2O = cytidine + acetate + H(+). It catalyses the reaction N(4)-acetyl-2'-deoxycytidine + H2O = 2'-deoxycytidine + acetate + H(+). The enzyme catalyses N(4)-acetylcytosine + H2O = cytosine + acetate + H(+). In terms of biological role, catalyzes the hydrolysis of N(4)-acetylcytidine (ac4C). This Vibrio cholerae serotype O1 (strain ATCC 39315 / El Tor Inaba N16961) protein is N(4)-acetylcytidine amidohydrolase.